The chain runs to 82 residues: T-complex protein 1 subunit gamma (82 aa).

Position 15 (Gly15) interacts with ADP. Gly15 serves as a coordination point for ATP. Asp66 serves as a coordination point for Mg(2+). ADP-binding residues include Gly67, Thr68, Thr69, and Ser70. ATP-binding residues include Gly67, Thr68, and Thr69.

Belongs to the TCP-1 chaperonin family. As to quaternary structure, component of the chaperonin-containing T-complex (TRiC), a hexadecamer composed of two identical back-to-back stacked rings enclosing a protein folding chamber. Each ring is made up of eight different subunits: TCP1/CCT1, CCT2, CCT3, CCT4, CCT5, CCT6A/CCT6, CCT7, CCT8. Interacts with PACRG. Interacts with DNAAF4. Interacts with DLEC1.

It is found in the cytoplasm. The enzyme catalyses ATP + H2O = ADP + phosphate + H(+). Component of the chaperonin-containing T-complex (TRiC), a molecular chaperone complex that assists the folding of actin, tubulin and other proteins upon ATP hydrolysis. The TRiC complex mediates the folding of WRAP53/TCAB1, thereby regulating telomere maintenance. As part of the TRiC complex may play a role in the assembly of BBSome, a complex involved in ciliogenesis regulating transports vesicles to the cilia. The protein is T-complex protein 1 subunit gamma (CCT3) of Sus scrofa (Pig).